We begin with the raw amino-acid sequence, 351 residues long: Nicotinate-nucleotide--dimethylbenzimidazole phosphoribosyltransferase (351 aa).

The Proton acceptor role is filled by E315.

This sequence belongs to the CobT family.

The catalysed reaction is 5,6-dimethylbenzimidazole + nicotinate beta-D-ribonucleotide = alpha-ribazole 5'-phosphate + nicotinate + H(+). Its pathway is nucleoside biosynthesis; alpha-ribazole biosynthesis; alpha-ribazole from 5,6-dimethylbenzimidazole: step 1/2. In terms of biological role, catalyzes the synthesis of alpha-ribazole-5'-phosphate from nicotinate mononucleotide (NAMN) and 5,6-dimethylbenzimidazole (DMB). The sequence is that of Nicotinate-nucleotide--dimethylbenzimidazole phosphoribosyltransferase from Acetivibrio thermocellus (strain ATCC 27405 / DSM 1237 / JCM 9322 / NBRC 103400 / NCIMB 10682 / NRRL B-4536 / VPI 7372) (Clostridium thermocellum).